Here is a 488-residue protein sequence, read N- to C-terminus: MGKFLATLILFFQFCPLIFGDYSPSCCTLTIGVSSYHSKPCNPAQPVCSWTLDLLALSADQALQPPCPNLVSYSSYHATYSLYLFPHWTKKPNRNGGGYYSASYSDPCSLKCPYLGCQSWTCPYTGAVSSPYWKFQHDVNFTQEVSRLNINLHFSKCGFPFSLLVDAPGYDPIWFLNTEPSQLPPTAPPLLPHSNLDHILEPSIPWKSKLLTLVQLTLQSTNYTCIVCIDRASLSTWHVLYSPNVSVPSSSSTPLLYPSLALPAPHLTLPFNWTHCFDPQIQAIVSSPCHNSLILPPFSLSPVPTLGSRSRRAVPVAVWLVSALAMGAGVAGGITGSMSLASGKSLLHEVDKDISQLTQAIVKNHKNLLKIAQYAAQNRRGLDLLFWEQGGLCKALQEQCRFPNITNSHVPILQERPPLENRVLTGWGLNWDLGLSQWAREALQTGITLVALLLLVILAGPCILRQLRHLPSRVRYPHYSLIKPESSL.

Positions 1–20 are cleaved as a signal peptide; sequence MGKFLATLILFFQFCPLIFG. Over 21–442 the chain is Extracellular; the sequence is DYSPSCCTLT…LGLSQWAREA (422 aa). 2 N-linked (GlcNAc...) asparagine; by host glycosylation sites follow: asparagine 140 and asparagine 222. Residues 225 to 228 carry the CXXC motif; sequence CIVC. Asparagine 244 and asparagine 272 each carry an N-linked (GlcNAc...) asparagine; by host glycan. The segment at 313–333 is fusion peptide; it reads AVPVAVWLVSALAMGAGVAGG. Coiled-coil stretches lie at residues 341-387 and 397-429; these read ASGK…LLFW and QEQC…GWGL. The interval 376–392 is immunosuppression; sequence AQNRRGLDLLFWEQGGL. Residues cysteine 393 and cysteine 400 are joined by a disulfide bond. An N-linked (GlcNAc...) asparagine; by host glycan is attached at asparagine 404. The helical transmembrane segment at 443–463 threads the bilayer; sequence LQTGITLVALLLLVILAGPCI. Cysteine 462 is lipidated: S-palmitoyl cysteine; by host. Over 464–488 the chain is Cytoplasmic; the sequence is LRQLRHLPSRVRYPHYSLIKPESSL.

The mature envelope protein (Env) consists of a trimer of SU-TM heterodimers attached by non-covalent interactions or by a labile interchain disulfide bond. Post-translationally, specific enzymatic cleavages in vivo yield mature proteins. Envelope glycoproteins are synthesized as an inactive precursor that is N-glycosylated and processed likely by host cell furin or by a furin-like protease in the Golgi to yield the mature SU and TM proteins. The cleavage site between SU and TM requires the minimal sequence [KR]-X-[KR]-R. The transmembrane protein is palmitoylated.

It localises to the virion membrane. Its subcellular location is the host cell membrane. Functionally, the surface protein (SU) attaches the virus to the host cell by binding to its receptor. This interaction triggers the refolding of the transmembrane protein (TM) and is thought to activate its fusogenic potential by unmasking its fusion peptide. Fusion occurs at the host cell plasma membrane. The transmembrane protein (TM) acts as a class I viral fusion protein. Under the current model, the protein has at least 3 conformational states: pre-fusion native state, pre-hairpin intermediate state, and post-fusion hairpin state. During viral and target cell membrane fusion, the coiled coil regions (heptad repeats) assume a trimer-of-hairpins structure, positioning the fusion peptide in close proximity to the C-terminal region of the ectodomain. The formation of this structure appears to drive apposition and subsequent fusion of viral and target cell membranes. Membranes fusion leads to delivery of the nucleocapsid into the cytoplasm. The polypeptide is Envelope glycoprotein gp62 (env) (Homo sapiens (Human)).